Reading from the N-terminus, the 179-residue chain is Large ribosomal subunit protein uL5 (179 aa).

This sequence belongs to the universal ribosomal protein uL5 family. In terms of assembly, part of the 50S ribosomal subunit; part of the 5S rRNA/L5/L18/L25 subcomplex. Contacts the 5S rRNA and the P site tRNA. Forms a bridge to the 30S subunit in the 70S ribosome.

In terms of biological role, this is one of the proteins that bind and probably mediate the attachment of the 5S RNA into the large ribosomal subunit, where it forms part of the central protuberance. In the 70S ribosome it contacts protein S13 of the 30S subunit (bridge B1b), connecting the 2 subunits; this bridge is implicated in subunit movement. Contacts the P site tRNA; the 5S rRNA and some of its associated proteins might help stabilize positioning of ribosome-bound tRNAs. This is Large ribosomal subunit protein uL5 from Nitrosomonas eutropha (strain DSM 101675 / C91 / Nm57).